The chain runs to 194 residues: Peptidyl-tRNA hydrolase (194 aa).

Residue Tyr-17 coordinates tRNA. Residue His-22 is the Proton acceptor of the active site. TRNA contacts are provided by Tyr-68, Asn-70, and Asn-116.

It belongs to the PTH family. In terms of assembly, monomer.

It localises to the cytoplasm. It catalyses the reaction an N-acyl-L-alpha-aminoacyl-tRNA + H2O = an N-acyl-L-amino acid + a tRNA + H(+). Functionally, hydrolyzes ribosome-free peptidyl-tRNAs (with 1 or more amino acids incorporated), which drop off the ribosome during protein synthesis, or as a result of ribosome stalling. Catalyzes the release of premature peptidyl moieties from peptidyl-tRNA molecules trapped in stalled 50S ribosomal subunits, and thus maintains levels of free tRNAs and 50S ribosomes. This Pseudomonas fluorescens (strain SBW25) protein is Peptidyl-tRNA hydrolase.